We begin with the raw amino-acid sequence, 705 residues long: Polyribonucleotide nucleotidyltransferase (705 aa).

Mg(2+)-binding residues include Asp486 and Asp492. The KH domain maps to 553-612 (PRIYKIKINPEKIKDVIGKGGSVIRMLTEKTKSSIEIEDDGTVKVISTDIKNAQCALKKI). An S1 motif domain is found at 622–690 (NKIYVAKITR…RYGRIRLSFT (69 aa)).

This sequence belongs to the polyribonucleotide nucleotidyltransferase family. Component of the RNA degradosome, which is a multiprotein complex involved in RNA processing and mRNA degradation. Mg(2+) is required as a cofactor.

Its subcellular location is the cytoplasm. The enzyme catalyses RNA(n+1) + phosphate = RNA(n) + a ribonucleoside 5'-diphosphate. Functionally, involved in mRNA degradation. Catalyzes the phosphorolysis of single-stranded polyribonucleotides processively in the 3'- to 5'-direction. The chain is Polyribonucleotide nucleotidyltransferase from Wigglesworthia glossinidia brevipalpis.